The following is a 513-amino-acid chain: Histidine--tRNA ligase (513 aa).

Residues 1 to 24 constitute a mitochondrion transit peptide; the sequence is MADKAQLQEAIKTQGEVVRKLKSE. One can recognise a WHEP-TRS domain in the interval 3–59; that stretch reads DKAQLQEAIKTQGEVVRKLKSEKASKEQIDEEVARLLQLKAQLGGDEGKHVFVLKTA. L-histidine-binding positions include 130–132, Arg-157, Gln-173, Asp-177, Arg-326, and 330–331; these read DLT and YY.

Belongs to the class-II aminoacyl-tRNA synthetase family.

Its subcellular location is the cytoplasm. It localises to the mitochondrion. It carries out the reaction tRNA(His) + L-histidine + ATP = L-histidyl-tRNA(His) + AMP + diphosphate + H(+). Its function is as follows. Catalyzes the aminoacylation of histidyl-tRNA. The protein is Histidine--tRNA ligase of Danio rerio (Zebrafish).